We begin with the raw amino-acid sequence, 628 residues long: DNA-directed RNA polymerase subunit gamma (628 aa).

4 residues coordinate Zn(2+): Cys-71, Cys-73, Cys-86, and Cys-89. Mg(2+) is bound by residues Asp-467, Asp-469, and Asp-471.

It belongs to the RNA polymerase beta' chain family. RpoC1 subfamily. In cyanobacteria the RNAP catalytic core is composed of 2 alpha, 1 beta, 1 beta', 1 gamma and 1 omega subunit. When a sigma factor is associated with the core the holoenzyme is formed, which can initiate transcription. Requires Mg(2+) as cofactor. Zn(2+) serves as cofactor.

The catalysed reaction is RNA(n) + a ribonucleoside 5'-triphosphate = RNA(n+1) + diphosphate. In terms of biological role, DNA-dependent RNA polymerase catalyzes the transcription of DNA into RNA using the four ribonucleoside triphosphates as substrates. In Crocosphaera subtropica (strain ATCC 51142 / BH68) (Cyanothece sp. (strain ATCC 51142)), this protein is DNA-directed RNA polymerase subunit gamma.